The chain runs to 171 residues: Secreted protein CSS3 (171 aa).

Residues 1-20 (MVPLFGLFCIFSQLYSLCSA) form the signal peptide. N-linked (GlcNAc...) asparagine glycosylation is found at N37, N139, and N159.

The protein localises to the cytoplasm. The protein resides in the secreted. This is Secreted protein CSS3 from Saccharomyces cerevisiae (strain ATCC 204508 / S288c) (Baker's yeast).